Here is a 689-residue protein sequence, read N- to C-terminus: MATSQRKILVTSALPYANGPIHLGHMLEYIQTDIWSRYQKLRGHECHYICADDAHGTPIMLKAQQLGIAPEDMIAQVNKEHQQDFADFNVAFDNYHSTHSEENRLMASDIYLKLRDNGYIKSKSISQLFDPEKSMFLPDRFVKGTCPKCKSPDQYGDNCDSCGATYSPTELINPKSAVSGATPVMKDTEHFFFDLPAFEGMLKEWTRSGALQVEMANKLDEWFEQGLQQWDITRDAPYFGFEIPDAPGKYFYVWLDAPIGYMGSFKNLCAKRPELSFDEFWGKDSTAEVYHFIGKDIVYFHSLFWPAMLHGSGYRQPNSVYAHGYVTVNGAKMSKSKGTFIKARTYLDHLDPEYLRYYYAAKLSSRIDDLDLNLEDFAQRVNSDLVGKLVNLASRTAGFITKRFDGKLAKINDTTLTEAFLAKQDVIADFYESREYGKAMREIMALADIANGFVADAAPWQMVKHDDQQEAAHQVCSNALNLFRILVTYLKPVLPRLAQDVEAFFQLPLTWDALGQDLAGHEIAPFKAMMQRVELDKVNAMVADSKDNLQVTADAPKTAAPEKIAKASSVSSEPLVSDPISETINFDDFAKIDLRIARIVKAEHVADADKLLKLQLDIGGETRQVFAGIKSAYSPEDLEGKLTVMVANLAPRKMRFGMSEGMVLAAGPGGSDLWILEPHEGAQPGMRVK.

Positions Pro-15–His-25 match the 'HIGH' region motif. The Zn(2+) site is built by Cys-146, Cys-149, Cys-159, and Cys-162. Residues Lys-332–Ser-336 carry the 'KMSKS' region motif. Lys-335 contributes to the ATP binding site. Positions Asp-588–Lys-689 constitute a tRNA-binding domain.

It belongs to the class-I aminoacyl-tRNA synthetase family. MetG type 1 subfamily. In terms of assembly, homodimer. It depends on Zn(2+) as a cofactor.

The protein resides in the cytoplasm. It catalyses the reaction tRNA(Met) + L-methionine + ATP = L-methionyl-tRNA(Met) + AMP + diphosphate. Is required not only for elongation of protein synthesis but also for the initiation of all mRNA translation through initiator tRNA(fMet) aminoacylation. In Shewanella baltica (strain OS155 / ATCC BAA-1091), this protein is Methionine--tRNA ligase.